The chain runs to 692 residues: MAREFSLENTRNIGIMAHIDAGKTTATERILYYTGRIHKIGETHEGASQMDWMEQEQERGITITSAATTAQWKGHRVNIIDTPGHVDFTVEVERSLRVLDGAVAVLDAQSGVEPQTETVWRQATTYGVPRIVFVNKMDKIGADFLYSVGTIHDRLQANAHPIQLPIGAEDEFNGIIDLVEECAYMYGNDLGTDIQRVEIPEEHKELAEEYRGKLIEAVAELDEEMMMKYLEGEEITVEELKAGIRKATTSVEFFPVICGSAFKNKGVQILLDAVIDYLPSPLDVPAIKGIVPDTDEEVERKSSDEEPFAALAFKIMTDPYVGKLTFFRVYSGVLNSGSYVKNSTKGKRERVGRILQMHANSREEISTVYAGDIAAAVGLKDTTTGDTLCDEKSLVILESMEFPEPVISVAIEPKSKADQDKMGTALSKLSEEDPTFRAHTDQETGQTIIAGMGELHLDIIVDRMRREFKVEANVGAPQVAYRETFRAAAKVEGKFARQSGGRGQFGHVWIEFEPNEEGKGFEFENKIVGGVVPREYIPAVGAGLEDALKNGVLAGYPVVDIKAALVDGSYHDVDSSEMAFKIAASMALKAAVSKCNPVILEPMMKVEVVIPEEYMGDIMGDVTSRRGRVEGMEARGNAQVVRAMVPLSEMFGYATSLRSNTQGRGTFSXVFDHYEEVPKSVSEEIIKKNKGE.

In terms of domain architecture, tr-type G spans 8–282; that stretch reads ENTRNIGIMA…AVIDYLPSPL (275 aa). GTP-binding positions include 17–24, 81–85, and 135–138; these read AHIDAGKT, DTPGH, and NKMD.

This sequence belongs to the TRAFAC class translation factor GTPase superfamily. Classic translation factor GTPase family. EF-G/EF-2 subfamily.

The protein localises to the cytoplasm. Catalyzes the GTP-dependent ribosomal translocation step during translation elongation. During this step, the ribosome changes from the pre-translocational (PRE) to the post-translocational (POST) state as the newly formed A-site-bound peptidyl-tRNA and P-site-bound deacylated tRNA move to the P and E sites, respectively. Catalyzes the coordinated movement of the two tRNA molecules, the mRNA and conformational changes in the ribosome. This is Elongation factor G from Bacillus cereus (strain AH820).